Reading from the N-terminus, the 722-residue chain is Mating-type switching protein swi2 (722 aa).

Disordered stretches follow at residues 1–35 (MNVN…GVGS) and 301–342 (SEEF…PLPS). Polar residues predominate over residues 9–22 (SIPVNTGSESISSN). A compositionally biased stretch (acidic residues) spans 302–316 (EEFDFEPSREDEDFP). Over residues 319–332 (TSDSTGQDPLSSEP) the composition is skewed to polar residues.

As to quaternary structure, interacts with swi5 and rhp51.

Its function is as follows. Required for normal mating-type switching. The sequence is that of Mating-type switching protein swi2 (swi2) from Schizosaccharomyces pombe (strain 972 / ATCC 24843) (Fission yeast).